We begin with the raw amino-acid sequence, 1057 residues long: Carbamoyl phosphate synthase large chain (1057 aa).

The segment at 1-401 (MPKRNDIKTI…SLLKAIRSLE (401 aa)) is carboxyphosphate synthetic domain. R129, R169, G175, G176, K208, I210, E215, G241, I242, H243, Q284, and E298 together coordinate ATP. An ATP-grasp 1 domain is found at 133–327 (RTLMNDLNVP…IAKLAAKIAV (195 aa)). Positions 284, 298, and 300 each coordinate Mg(2+). Residues Q284, E298, and N300 each contribute to the Mn(2+) site. The segment at 402-546 (YGVHHLGLPN…YGTYETENES (145 aa)) is oligomerization domain. A carbamoyl phosphate synthetic domain region spans residues 547 to 929 (IVTDKEKILV…ALFKGLTGSG (383 aa)). Positions 671–861 (EALLRKINVP…MAQLAMRAII (191 aa)) constitute an ATP-grasp 2 domain. Positions 707, 746, 748, 752, 777, 778, 779, 780, 820, and 832 each coordinate ATP. Mg(2+) is bound by residues Q820, E832, and N834. Q820, E832, and N834 together coordinate Mn(2+). The region spanning 930 to 1057 (VEVKDHGTVL…ESMTFTMRQM (128 aa)) is the MGS-like domain. Residues 930–1057 (VEVKDHGTVL…ESMTFTMRQM (128 aa)) form an allosteric domain region.

This sequence belongs to the CarB family. Composed of two chains; the small (or glutamine) chain promotes the hydrolysis of glutamine to ammonia, which is used by the large (or ammonia) chain to synthesize carbamoyl phosphate. Tetramer of heterodimers (alpha,beta)4. Requires Mg(2+) as cofactor. The cofactor is Mn(2+).

The enzyme catalyses hydrogencarbonate + L-glutamine + 2 ATP + H2O = carbamoyl phosphate + L-glutamate + 2 ADP + phosphate + 2 H(+). It catalyses the reaction hydrogencarbonate + NH4(+) + 2 ATP = carbamoyl phosphate + 2 ADP + phosphate + 2 H(+). It functions in the pathway amino-acid biosynthesis; L-arginine biosynthesis; carbamoyl phosphate from bicarbonate: step 1/1. Its pathway is pyrimidine metabolism; UMP biosynthesis via de novo pathway; (S)-dihydroorotate from bicarbonate: step 1/3. Its function is as follows. Large subunit of the glutamine-dependent carbamoyl phosphate synthetase (CPSase). CPSase catalyzes the formation of carbamoyl phosphate from the ammonia moiety of glutamine, carbonate, and phosphate donated by ATP, constituting the first step of 2 biosynthetic pathways, one leading to arginine and/or urea and the other to pyrimidine nucleotides. The large subunit (synthetase) binds the substrates ammonia (free or transferred from glutamine from the small subunit), hydrogencarbonate and ATP and carries out an ATP-coupled ligase reaction, activating hydrogencarbonate by forming carboxy phosphate which reacts with ammonia to form carbamoyl phosphate. This chain is Carbamoyl phosphate synthase large chain, found in Staphylococcus aureus (strain Mu3 / ATCC 700698).